We begin with the raw amino-acid sequence, 185 residues long: Putative manganese efflux pump MntP (185 aa).

6 helical membrane-spanning segments follow: residues 3–23 (IFTLLMIAAGLSMDNFAVSLA), 40–60 (LLFVAAHLVMFSLGWFGVSVI), 64–84 (FDAYDHWISFGLLVFIGLRMI), 102–122 (TFSRLLLIALATSMDALAVGI), 124–144 (LSLAGVHFVLSVAAISFFVLI), and 165–185 (EIFGGIVLIGIALKILLDAMM).

It belongs to the MntP (TC 9.B.29) family.

It is found in the cell inner membrane. In terms of biological role, probably functions as a manganese efflux pump. In Elusimicrobium minutum (strain Pei191), this protein is Putative manganese efflux pump MntP.